A 143-amino-acid chain; its full sequence is Transcription antitermination protein NusB (143 aa).

Belongs to the NusB family.

Functionally, involved in transcription antitermination. Required for transcription of ribosomal RNA (rRNA) genes. Binds specifically to the boxA antiterminator sequence of the ribosomal RNA (rrn) operons. The sequence is that of Transcription antitermination protein NusB from Dehalococcoides mccartyi (strain ATCC BAA-2266 / KCTC 15142 / 195) (Dehalococcoides ethenogenes (strain 195)).